The following is an 83-amino-acid chain: Mu-theraphotoxin-Hhn2b 2 (83 aa).

The first 21 residues, 1–21, serve as a signal peptide directing secretion; the sequence is MKASMFLALAGLVLLFVVCYA. Residues 22–48 constitute a propeptide that is removed on maturation; sequence SESEEKEFPRELISKIFTVDDFKGEER. Cystine bridges form between cysteine 50–cysteine 65, cysteine 57–cysteine 70, and cysteine 64–cysteine 77. Leucine 81 bears the Leucine amide mark.

The protein belongs to the neurotoxin 10 (Hwtx-1) family. 14 (Hntx-1) subfamily. As to quaternary structure, monomer. Expressed by the venom gland.

The protein localises to the secreted. Weakly blocks the rat SCN2A/SCN1B (Nav1.2/beta-1) sodium channel (IC(50)=68 uM) and the insect sodium channel para/tipE (IC(50)=4.3 uM), without altering the activation or inactivation kinetics (depressant toxin). The chain is Mu-theraphotoxin-Hhn2b 2 from Cyriopagopus hainanus (Chinese bird spider).